A 43-amino-acid polypeptide reads, in one-letter code: Disintegrin CV (43 aa).

4 cysteine pairs are disulfide-bonded: Cys-1/Cys-10, Cys-6/Cys-29, Cys-7/Cys-34, and Cys-19/Cys-36. In terms of domain architecture, Disintegrin spans 1 to 43; that stretch reads CTTGPCCRQCKLKPAGTTCWRTSVSSHYCTGRSCECPSYPGNG. A Cell attachment site; atypical (RTS) motif is present at residues 21–23; sequence RTS.

The protein belongs to the disintegrin family. Short disintegrin subfamily. In terms of assembly, monomer. Expressed by the venom gland.

It localises to the secreted. Functionally, specifically interacts with the alpha-1/beta-1 integrin (ITGA1/ITGB1). Exhibits highly inhibitory effects on cell adhesion and cell migration to collagens I and IV. Also shows in vivo anti-angiogenic activity. The polypeptide is Disintegrin CV (Cerastes vipera (Sahara sand viper)).